Here is a 146-residue protein sequence, read N- to C-terminus: Holo-[acyl-carrier-protein] synthase (146 aa).

Mg(2+) contacts are provided by aspartate 8 and glutamate 61.

Belongs to the P-Pant transferase superfamily. AcpS family. Mg(2+) is required as a cofactor.

The protein resides in the cytoplasm. The enzyme catalyses apo-[ACP] + CoA = holo-[ACP] + adenosine 3',5'-bisphosphate + H(+). Its function is as follows. Transfers the 4'-phosphopantetheine moiety from coenzyme A to a Ser of acyl-carrier-protein. The protein is Holo-[acyl-carrier-protein] synthase of Rhodopseudomonas palustris (strain ATCC BAA-98 / CGA009).